The following is a 220-amino-acid chain: Probable septum site-determining protein MinC (220 aa).

The protein belongs to the MinC family. As to quaternary structure, interacts with MinD and FtsZ.

Cell division inhibitor that blocks the formation of polar Z ring septums. Rapidly oscillates between the poles of the cell to destabilize FtsZ filaments that have formed before they mature into polar Z rings. Prevents FtsZ polymerization. This Vibrio campbellii (strain ATCC BAA-1116) protein is Probable septum site-determining protein MinC.